Reading from the N-terminus, the 831-residue chain is Serine/threonine-protein kinase ATG1 (831 aa).

Residues 21 to 321 (YSVEKEIGKG…FTDFFNNEVV (301 aa)) enclose the Protein kinase domain. ATP contacts are provided by residues 27–35 (IGKGSFAVV) and lysine 50. The Proton acceptor role is filled by aspartate 168. Composition is skewed to polar residues over residues 360–382 (QQES…TGVR) and 405–419 (NSQN…ASQK). Residues 360–419 (QQESAHIPPTQTDENTSVQTGVRRTSGKERLATNHPPHQQIHPEDNSQNPEQSYQSASQK) form a disordered region.

The protein belongs to the protein kinase superfamily. Ser/Thr protein kinase family. APG1/unc-51/ULK1 subfamily. As to quaternary structure, homodimer. Forms a ternary complex with ATG13 and ATG17.

Its subcellular location is the cytoplasm. It is found in the preautophagosomal structure membrane. It catalyses the reaction L-seryl-[protein] + ATP = O-phospho-L-seryl-[protein] + ADP + H(+). The catalysed reaction is L-threonyl-[protein] + ATP = O-phospho-L-threonyl-[protein] + ADP + H(+). Functionally, serine/threonine protein kinase involved in the cytoplasm to vacuole transport (Cvt) and found to be essential in autophagy, where it is required for the formation of autophagosomes. Involved in the clearance of protein aggregates which cannot be efficiently cleared by the proteasome. Required for selective autophagic degradation of the nucleus (nucleophagy) as well as for mitophagy which contributes to regulate mitochondrial quantity and quality by eliminating the mitochondria to a basal level to fulfill cellular energy requirements and preventing excess ROS production. Also involved in endoplasmic reticulum-specific autophagic process, in selective removal of ER-associated degradation (ERAD) substrates. Plays a key role in ATG9 and ATG23 cycling through the pre-autophagosomal structure and is necessary to promote ATG18 binding to ATG9 through phosphorylation of ATG9. Catalyzes phosphorylation of ATG4, decreasing the interaction between ATG4 and ATG8 and impairing deconjugation of PE-conjugated forms of ATG8. The chain is Serine/threonine-protein kinase ATG1 from Kluyveromyces lactis (strain ATCC 8585 / CBS 2359 / DSM 70799 / NBRC 1267 / NRRL Y-1140 / WM37) (Yeast).